Here is a 463-residue protein sequence, read N- to C-terminus: MAIAENYEDVLKGKYPAKAHAKKVAEWIIAKGGDKNGTIYLEAQKQKLNEDNDGEAPFRQRRYFFYLSGCELPDSYLTYEIATEKLTLFIPPVEPDEVIWSGLPMSPEDAKAKYDIDHCLTTKDVNAHLTSTSESAQSTIYAIPEQVSDHVTFISYKEKEFKQLKPAIEYCRVTKSDYEIALIRKANMISTAAHEAVMKAASTAKNECELEAVFLKACVERNAKNQAYHSIVAAGEHAATLHYVHNAAPISDQNLLLLDAGCEVDCYASDITRTFPLKGKFTAESLAIYKIVLDMQHQCINALKEGVVWDSVHELAHKVAIKGLLELGILKGDAEEIFTKRISVAFFPHGLGHYLGMDTHDTGGNANYADKDVMFRYLRTRGSLPERSVITVEPGVYFCRFIIEPYLKDEEKKKYIDESVLERYWSVGGVRIEDNVLVTKNGFENLTPTPKEIDDITKLILST.

Asp259, Asp270, Glu393, and Glu433 together coordinate Mn(2+).

The protein belongs to the peptidase M24B family. Requires Mn(2+) as cofactor.

The enzyme catalyses Release of any N-terminal amino acid, including proline, that is linked to proline, even from a dipeptide or tripeptide.. Its function is as follows. Catalyzes the removal of a penultimate prolyl residue from the N-termini of peptides. The sequence is that of Probable Xaa-Pro aminopeptidase pepP (pepP) from Pyrenophora teres f. teres (strain 0-1) (Barley net blotch fungus).